The sequence spans 714 residues: Fatty acid oxidation complex subunit alpha (714 aa).

Positions 1–190 (MEMASAFTLN…KLGLVDDVVP (190 aa)) are enoyl-CoA hydratase. A 3-hydroxyacyl-CoA dehydrogenase region spans residues 306–714 (APLNSVGILG…FWKTTATDLQ (409 aa)).

In the N-terminal section; belongs to the enoyl-CoA hydratase/isomerase family. This sequence in the central section; belongs to the 3-hydroxyacyl-CoA dehydrogenase family. As to quaternary structure, heterotetramer of two alpha chains (FadJ) and two beta chains (FadI).

Its subcellular location is the cytoplasm. The enzyme catalyses a (3S)-3-hydroxyacyl-CoA = a (2E)-enoyl-CoA + H2O. The catalysed reaction is a 4-saturated-(3S)-3-hydroxyacyl-CoA = a (3E)-enoyl-CoA + H2O. It catalyses the reaction a (3S)-3-hydroxyacyl-CoA + NAD(+) = a 3-oxoacyl-CoA + NADH + H(+). It carries out the reaction (3S)-3-hydroxybutanoyl-CoA = (3R)-3-hydroxybutanoyl-CoA. Its pathway is lipid metabolism; fatty acid beta-oxidation. Its function is as follows. Catalyzes the formation of a hydroxyacyl-CoA by addition of water on enoyl-CoA. Also exhibits 3-hydroxyacyl-CoA epimerase and 3-hydroxyacyl-CoA dehydrogenase activities. The protein is Fatty acid oxidation complex subunit alpha of Escherichia coli O6:K15:H31 (strain 536 / UPEC).